A 324-amino-acid chain; its full sequence is Protoheme IX farnesyltransferase 2 (324 aa).

9 helical membrane-spanning segments follow: residues 39–59, 63–83, 115–135, 137–157, 166–186, 192–212, 239–259, 260–280, and 302–322; these read LIKPRVIELLLVTTIPAMLLA, IPSPWLVIATLVGGTMAAGSA, HALVFGIALGAGSFGWLWATT, LLSAVLAVATILFYVFVYTLV, IVWGGAAGCMPVVIGWAGVTG, ALVMFGIIFFWTPPHTWSLAM, IVVFTWLMVLWTLLLAPATGW, LYTAFAIAAGAWFLVLAHRLH, and LMIVCVALAVDSALSLPVLGW.

It belongs to the UbiA prenyltransferase family. Protoheme IX farnesyltransferase subfamily.

The protein resides in the cell membrane. The enzyme catalyses heme b + (2E,6E)-farnesyl diphosphate + H2O = Fe(II)-heme o + diphosphate. It participates in porphyrin-containing compound metabolism; heme O biosynthesis; heme O from protoheme: step 1/1. Its function is as follows. Converts heme B (protoheme IX) to heme O by substitution of the vinyl group on carbon 2 of heme B porphyrin ring with a hydroxyethyl farnesyl side group. This chain is Protoheme IX farnesyltransferase 2, found in Saccharopolyspora erythraea (strain ATCC 11635 / DSM 40517 / JCM 4748 / NBRC 13426 / NCIMB 8594 / NRRL 2338).